Here is a 955-residue protein sequence, read N- to C-terminus: Mediator of RNA polymerase II transcription subunit 16 (955 aa).

The disordered stretch occupies residues 855 to 874 (ALPETNANANANQNGKSSTQ). Positions 857–873 (PETNANANANQNGKSST) are enriched in polar residues.

The protein belongs to the Mediator complex subunit 16 family. Component of the Mediator complex.

The protein localises to the nucleus. Functionally, component of the Mediator complex, a coactivator involved in the regulated transcription of nearly all RNA polymerase II-dependent genes. Mediator functions as a bridge to convey information from gene-specific regulatory proteins to the basal RNA polymerase II transcription machinery. Mediator is recruited to promoters by direct interactions with regulatory proteins and serves as a scaffold for the assembly of a functional preinitiation complex with RNA polymerase II and the general transcription factors. The protein is Mediator of RNA polymerase II transcription subunit 16 (sin4) of Aspergillus fumigatus (strain ATCC MYA-4609 / CBS 101355 / FGSC A1100 / Af293) (Neosartorya fumigata).